The primary structure comprises 387 residues: Putative actin-29 (387 aa).

It belongs to the actin family.

It localises to the cytoplasm. The protein resides in the cytoskeleton. The catalysed reaction is ATP + H2O = ADP + phosphate + H(+). Actins are highly conserved proteins that are involved in various types of cell motility and are ubiquitously expressed in all eukaryotic cells. Multiple isoforms are involved in various cellular functions such as cytoskeleton structure, cell mobility, chromosome movement and muscle contraction. This chain is Putative actin-29 (act29), found in Dictyostelium discoideum (Social amoeba).